Here is a 341-residue protein sequence, read N- to C-terminus: Solute carrier family 25 member 43 (341 aa).

Solcar repeat units follow at residues 11 to 101 (TGSQ…MDDL), 105 to 185 (SQWS…LLVY), and 200 to 298 (SHLQ…LYQN). The next 6 helical transmembrane spans lie at 16 to 36 (LLCA…LELA), 68 to 88 (LWKG…VQLA), 110 to 130 (IVTG…TDLI), 166 to 186 (GVSL…LVYM), 205 to 225 (FANV…FDTV), and 262 to 282 (VLGL…YFGV).

This sequence belongs to the mitochondrial carrier (TC 2.A.29) family.

The protein resides in the mitochondrion inner membrane. This chain is Solute carrier family 25 member 43 (Slc25a43), found in Mus musculus (Mouse).